The sequence spans 286 residues: Bifunctional protein FolD (286 aa).

NADP(+)-binding positions include 166 to 168 and isoleucine 232; that span reads GAS.

The protein belongs to the tetrahydrofolate dehydrogenase/cyclohydrolase family. As to quaternary structure, homodimer.

It carries out the reaction (6R)-5,10-methylene-5,6,7,8-tetrahydrofolate + NADP(+) = (6R)-5,10-methenyltetrahydrofolate + NADPH. The enzyme catalyses (6R)-5,10-methenyltetrahydrofolate + H2O = (6R)-10-formyltetrahydrofolate + H(+). Its pathway is one-carbon metabolism; tetrahydrofolate interconversion. Its function is as follows. Catalyzes the oxidation of 5,10-methylenetetrahydrofolate to 5,10-methenyltetrahydrofolate and then the hydrolysis of 5,10-methenyltetrahydrofolate to 10-formyltetrahydrofolate. This is Bifunctional protein FolD from Vibrio campbellii (strain ATCC BAA-1116).